The sequence spans 238 residues: Large ribosomal subunit protein uL2 (238 aa).

The segment covering 1 to 11 has biased composition (polar residues); sequence MGKRLISQNRG. Disordered regions lie at residues 1-22 and 202-223; these read MGKR…APSH and FGGG…APPG.

Belongs to the universal ribosomal protein uL2 family. Part of the 50S ribosomal subunit. Forms a bridge to the 30S subunit in the 70S ribosome.

In terms of biological role, one of the primary rRNA binding proteins. Required for association of the 30S and 50S subunits to form the 70S ribosome, for tRNA binding and peptide bond formation. It has been suggested to have peptidyltransferase activity; this is somewhat controversial. Makes several contacts with the 16S rRNA in the 70S ribosome. This is Large ribosomal subunit protein uL2 from Methanosarcina acetivorans (strain ATCC 35395 / DSM 2834 / JCM 12185 / C2A).